Reading from the N-terminus, the 292-residue chain is ATP phosphoribosyltransferase (292 aa).

It belongs to the ATP phosphoribosyltransferase family. Long subfamily. Mg(2+) is required as a cofactor.

The protein localises to the cytoplasm. The catalysed reaction is 1-(5-phospho-beta-D-ribosyl)-ATP + diphosphate = 5-phospho-alpha-D-ribose 1-diphosphate + ATP. It participates in amino-acid biosynthesis; L-histidine biosynthesis; L-histidine from 5-phospho-alpha-D-ribose 1-diphosphate: step 1/9. Feedback inhibited by histidine. Functionally, catalyzes the condensation of ATP and 5-phosphoribose 1-diphosphate to form N'-(5'-phosphoribosyl)-ATP (PR-ATP). Has a crucial role in the pathway because the rate of histidine biosynthesis seems to be controlled primarily by regulation of HisG enzymatic activity. The sequence is that of ATP phosphoribosyltransferase from Gemmatimonas aurantiaca (strain DSM 14586 / JCM 11422 / NBRC 100505 / T-27).